The primary structure comprises 277 residues: Urease accessory protein UreD (277 aa).

The protein belongs to the UreD family. In terms of assembly, ureD, UreF and UreG form a complex that acts as a GTP-hydrolysis-dependent molecular chaperone, activating the urease apoprotein by helping to assemble the nickel containing metallocenter of UreC. The UreE protein probably delivers the nickel.

The protein resides in the cytoplasm. Required for maturation of urease via the functional incorporation of the urease nickel metallocenter. The sequence is that of Urease accessory protein UreD from Yersinia pestis bv. Antiqua (strain Antiqua).